Consider the following 85-residue polypeptide: MKRNQRKQLIGTVVSTKNAKTATVKVTSRFKHPLYHKSVIRHKKYHVHNFGELVANDGDRVQIIETRPLSALKRWRIVKIIERAK.

The protein belongs to the universal ribosomal protein uS17 family. In terms of assembly, part of the 30S ribosomal subunit.

Its function is as follows. One of the primary rRNA binding proteins, it binds specifically to the 5'-end of 16S ribosomal RNA. The chain is Small ribosomal subunit protein uS17 from Mycoplasma genitalium (strain ATCC 33530 / DSM 19775 / NCTC 10195 / G37) (Mycoplasmoides genitalium).